A 239-amino-acid chain; its full sequence is THAP domain-containing protein 3 (239 aa).

A THAP-type zinc finger spans residues 1–82; that stretch reads MPKSCAARQC…LKHNAVPTVF (82 aa). The tract at residues 84 to 177 is disordered; that stretch reads FQDPTQQVRE…RRTPNKQPSD (94 aa). At S122 the chain carries Phosphoserine. The short motif at 177–180 is the HCFC1-binding motif (HBM) element; it reads DHSY.

As to quaternary structure, component of a THAP1/THAP3-HCFC1-OGT complex that contains at least, either THAP1 or THAP3, HCFC1 and OGT. Interacts directly with OGT and HCFC1 (via its HBM). In terms of tissue distribution, highly expressed in heart, skeletal muscle and placenta. Weaker expression in brain, kidney and liver.

Component of a THAP1/THAP3-HCFC1-OGT complex that is required for the regulation of the transcriptional activity of RRM1. This Homo sapiens (Human) protein is THAP domain-containing protein 3 (THAP3).